The primary structure comprises 123 residues: Ribonuclease P protein component (123 aa).

This sequence belongs to the RnpA family. As to quaternary structure, consists of a catalytic RNA component (M1 or rnpB) and a protein subunit.

It catalyses the reaction Endonucleolytic cleavage of RNA, removing 5'-extranucleotides from tRNA precursor.. Its function is as follows. RNaseP catalyzes the removal of the 5'-leader sequence from pre-tRNA to produce the mature 5'-terminus. It can also cleave other RNA substrates such as 4.5S RNA. The protein component plays an auxiliary but essential role in vivo by binding to the 5'-leader sequence and broadening the substrate specificity of the ribozyme. This Streptomyces griseus subsp. griseus (strain JCM 4626 / CBS 651.72 / NBRC 13350 / KCC S-0626 / ISP 5235) protein is Ribonuclease P protein component.